The primary structure comprises 277 residues: 4-diphosphocytidyl-2-C-methyl-D-erythritol kinase (277 aa).

The active site involves Lys-9. 91–101 (PMGAGLGGGSS) is a binding site for ATP. Asp-133 is an active-site residue.

The protein belongs to the GHMP kinase family. IspE subfamily.

It catalyses the reaction 4-CDP-2-C-methyl-D-erythritol + ATP = 4-CDP-2-C-methyl-D-erythritol 2-phosphate + ADP + H(+). It participates in isoprenoid biosynthesis; isopentenyl diphosphate biosynthesis via DXP pathway; isopentenyl diphosphate from 1-deoxy-D-xylulose 5-phosphate: step 3/6. Functionally, catalyzes the phosphorylation of the position 2 hydroxy group of 4-diphosphocytidyl-2C-methyl-D-erythritol. The polypeptide is 4-diphosphocytidyl-2-C-methyl-D-erythritol kinase (Acinetobacter baumannii (strain AB307-0294)).